The sequence spans 393 residues: Cytotoxic and regulatory T-cell molecule (393 aa).

An N-terminal signal peptide occupies residues 1 to 16 (MWWGALSLLFWVPVQA). The Ig-like V-type domain occupies 17 to 111 (AFLKMETVTV…SVKTKQVRVT (95 aa)). Residues 17 to 289 (AFLKMETVTV…HTGLARRKSG (273 aa)) are Extracellular-facing. Cystine bridges form between Cys-36–Cys-96 and Cys-139–Cys-194. Asn-85 and Asn-176 each carry an N-linked (GlcNAc...) asparagine glycan. Residues 119–208 (PTVEALVLRR…EGLHGRKLVA (90 aa)) form the Ig-like C2-type domain. Positions 218-228 (DQETSDQETSD) are enriched in acidic residues. The segment at 218–280 (DQETSDQETS…GLSTEASAQH (63 aa)) is disordered. The span at 229–246 (APEQSSLSSQALQQPTST) shows a compositional bias: low complexity. Polar residues predominate over residues 247–256 (VSMMENSSIP). The span at 257–267 (ETDKEEKEHAT) shows a compositional bias: basic and acidic residues. Polar residues predominate over residues 270 to 280 (PGLSTEASAQH). The chain crosses the membrane as a helical span at residues 290 to 310 (ILLLTLVSFLIFILFIIVQLF). The Cytoplasmic portion of the chain corresponds to 311–393 (IMKLRKAHVV…KHSRVPESIV (83 aa)). Residues 333–356 (ESYRSRSNNEETSSQENSSQAPQS) are disordered. Low complexity predominate over residues 342–352 (EETSSQENSSQ). The PDZ-binding motif lies at 390–393 (ESIV).

This sequence belongs to the nectin family. In terms of assembly, monomer. May form homodimer (via Ig-like V-type domain). Interacts (via Ig-like V-type domain) with CADM1 (via Ig-like V-type domain); the interaction competes with CRTAM homodimerization and CADM1 homodimerization. Interacts (via PDZ-binding motif) with SCRIB (via PDZ domain 3); the interaction promotes CRTAM and SCRIB polarization in a subset of CD4+ T-cells. In terms of tissue distribution, in the immune system, expression is restricted to activated class-I MHC-restricted cells, including NKT, NK and CD8+ T-cells (at protein level). Transiently expressed in activated CD8+ T-cells and a subset of activated CD4+ T-cells (at protein level). Expressed in activated intestinal T-cells, specifically intraepithelial CD4+ CD8+ T-cells, intraepithelial CD4+ T-cells and, CD8+ T-cells in the intestine epithelium, lamina propria, Peyer's Patches and mesenteric lymph nodes. Also expressed in spleen, brain and testis.

It is found in the cell membrane. Functionally, mediates heterophilic cell-cell adhesion which regulates the activation, differentiation and tissue retention of various T-cell subsets. Interaction with CADM1 promotes natural killer (NK) cell cytotoxicity and IFNG/interferon-gamma secretion by CD8+ T-cells in vitro as well as NK cell-mediated rejection of tumors expressing CADM1 in vivo. Regulates CD8+ T-cell proliferation in response to T-cell receptor (TCR) activation. Appears to be dispensable for CD8+ T-cell-mediated cytotoxicity. Interaction with SCRIB promotes the late phase of cellular polarization of a subset of CD4+ T-cells, which in turn regulates TCR-mediated proliferation and IFNG, IL17 and IL22 production. By interacting with CADM1 on CD8+ dendritic cells, regulates the retention of activated CD8+ T-cells within the draining lymph node. Required for the intestinal retention of intraepithelial CD4+ CD8+ T-cells and, to a lesser extent, intraepithelial and lamina propria CD8+ T-cells and CD4+ T-cells. Interaction with CADM1 promotes the adhesion to gut-associated CD103+ dendritic cells, which may facilitate the expression of gut-homing and adhesion molecules on T-cells and the conversion of CD4+ T-cells into CD4+ CD8+ T-cells. The polypeptide is Cytotoxic and regulatory T-cell molecule (Mus musculus (Mouse)).